Reading from the N-terminus, the 248-residue chain is Proteasome subunit alpha type-3 (248 aa).

This sequence belongs to the peptidase T1A family. In terms of assembly, the 26S proteasome consists of a 20S proteasome core and two 19S regulatory subunits. The 20S proteasome core is composed of 28 subunits that are arranged in four stacked rings, resulting in a barrel-shaped structure. The two end rings are each formed by seven alpha subunits, and the two central rings are each formed by seven beta subunits. The catalytic chamber with the active sites is on the inside of the barrel.

The protein localises to the cytoplasm. Its subcellular location is the nucleus. In terms of biological role, the proteasome is a multicatalytic proteinase complex which is characterized by its ability to cleave peptides with Arg, Phe, Tyr, Leu, and Glu adjacent to the leaving group at neutral or slightly basic pH. The proteasome has an ATP-dependent proteolytic activity. In Dictyostelium discoideum (Social amoeba), this protein is Proteasome subunit alpha type-3 (psmA3).